Reading from the N-terminus, the 1485-residue chain is Formin BNR1 (1485 aa).

Disordered stretches follow at residues H65 to H88, H226 to T248, and A549 to E575. Residues N110–G636 form the GBD/FH3 domain. The span at T231–T248 shows a compositional bias: polar residues. Acidic residues predominate over residues L553–D564. The stretch at A660–A734 forms a coiled coil. The interval G746–P874 is disordered. One can recognise an FH2 domain in the interval V953 to D1368. Coiled coils occupy residues H1240–N1312 and Q1351–E1382. Residues L1447–S1471 are disordered.

Belongs to the formin homology family. BNI1 subfamily. In terms of assembly, interacts with IQG1.

The protein localises to the bud neck. It localises to the cell septum. Functionally, may organize microtubules by mediating spindle positioning and movement in the budding process. Required for cytokinesis and the maintenance of polarized hyphal growth. This is Formin BNR1 (BNR1) from Candida albicans (strain SC5314 / ATCC MYA-2876) (Yeast).